Here is a 455-residue protein sequence, read N- to C-terminus: MGAMAQNPPNLRPDLAPRLVIDSPRREGQPTIGMVSLGCPKALVDSERILTRLRAEGYAISPDYAGADAVIVNTCGFLDSAKVESLEAIGEALRENGRVIVTGCLGAEPDYITGAHPKVLAVTGPHQYEQVLDAVHGAVPPAPDPFVDLLPATGVRLTPRHFSYLKISEGCNHTCRFCIIPDMRGRLASRPERAVLREAEKLVEAGVRELLVISQDTSAYGTDWKGPEKFPILPLARELGRLGAWVRLHYVYPYPHVRELIPLMAEGLVLPYLDIPFQHAHPEVLKRMARPAAAARTLDEIAAWRRDCPEIALRSTFIVGYPGETEAEFQTLLDWLDEAQLDRVGCFQYENVAGARSNALPDHVAPEVKQERWDRFMEKAQAISEVKLAAKVGRRIEVIVDEVDEDGATCRTKADAPEIDGNLFIDEGFRGLAPGDILTVEVEEAGEYDIWGRPV.

The region spanning 30-140 (PTIGMVSLGC…VLDAVHGAVP (111 aa)) is the MTTase N-terminal domain. Positions 39, 75, 104, 171, 175, and 178 each coordinate [4Fe-4S] cluster. The Radical SAM core domain maps to 157 to 386 (LTPRHFSYLK…MEKAQAISEV (230 aa)). Residues 389–455 (AAKVGRRIEV…GEYDIWGRPV (67 aa)) form the TRAM domain.

This sequence belongs to the methylthiotransferase family. RimO subfamily. Requires [4Fe-4S] cluster as cofactor.

It is found in the cytoplasm. It catalyses the reaction L-aspartate(89)-[ribosomal protein uS12]-hydrogen + (sulfur carrier)-SH + AH2 + 2 S-adenosyl-L-methionine = 3-methylsulfanyl-L-aspartate(89)-[ribosomal protein uS12]-hydrogen + (sulfur carrier)-H + 5'-deoxyadenosine + L-methionine + A + S-adenosyl-L-homocysteine + 2 H(+). In terms of biological role, catalyzes the methylthiolation of an aspartic acid residue of ribosomal protein uS12. This chain is Ribosomal protein uS12 methylthiotransferase RimO, found in Cereibacter sphaeroides (strain ATCC 17023 / DSM 158 / JCM 6121 / CCUG 31486 / LMG 2827 / NBRC 12203 / NCIMB 8253 / ATH 2.4.1.) (Rhodobacter sphaeroides).